The chain runs to 203 residues: N-(5'-phosphoribosyl)anthranilate isomerase (203 aa).

This sequence belongs to the TrpF family.

It carries out the reaction N-(5-phospho-beta-D-ribosyl)anthranilate = 1-(2-carboxyphenylamino)-1-deoxy-D-ribulose 5-phosphate. It participates in amino-acid biosynthesis; L-tryptophan biosynthesis; L-tryptophan from chorismate: step 3/5. The chain is N-(5'-phosphoribosyl)anthranilate isomerase from Listeria innocua serovar 6a (strain ATCC BAA-680 / CLIP 11262).